A 739-amino-acid polypeptide reads, in one-letter code: Phosphoribosylformylglycinamidine synthase subunit PurL (739 aa).

Histidine 54 is an active-site residue. Positions 57 and 96 each coordinate ATP. Glutamate 98 is a Mg(2+) binding site. Substrate is bound by residues serine 99 to histidine 102 and arginine 121. The active-site Proton acceptor is histidine 100. Mg(2+) is bound at residue aspartate 122. Glutamine 245 lines the substrate pocket. Residue aspartate 273 coordinates Mg(2+). Glutamate 317–glutamine 319 lines the substrate pocket. ATP-binding residues include aspartate 500 and glycine 537. Asparagine 538 contributes to the Mg(2+) binding site. Residue serine 540 participates in substrate binding.

This sequence belongs to the FGAMS family. As to quaternary structure, monomer. Part of the FGAM synthase complex composed of 1 PurL, 1 PurQ and 2 PurS subunits.

Its subcellular location is the cytoplasm. It catalyses the reaction N(2)-formyl-N(1)-(5-phospho-beta-D-ribosyl)glycinamide + L-glutamine + ATP + H2O = 2-formamido-N(1)-(5-O-phospho-beta-D-ribosyl)acetamidine + L-glutamate + ADP + phosphate + H(+). Its pathway is purine metabolism; IMP biosynthesis via de novo pathway; 5-amino-1-(5-phospho-D-ribosyl)imidazole from N(2)-formyl-N(1)-(5-phospho-D-ribosyl)glycinamide: step 1/2. Part of the phosphoribosylformylglycinamidine synthase complex involved in the purines biosynthetic pathway. Catalyzes the ATP-dependent conversion of formylglycinamide ribonucleotide (FGAR) and glutamine to yield formylglycinamidine ribonucleotide (FGAM) and glutamate. The FGAM synthase complex is composed of three subunits. PurQ produces an ammonia molecule by converting glutamine to glutamate. PurL transfers the ammonia molecule to FGAR to form FGAM in an ATP-dependent manner. PurS interacts with PurQ and PurL and is thought to assist in the transfer of the ammonia molecule from PurQ to PurL. The polypeptide is Phosphoribosylformylglycinamidine synthase subunit PurL (Bacillus anthracis (strain A0248)).